A 91-amino-acid chain; its full sequence is Acylphosphatase (91 aa).

Residues 3–91 (HIKVNVKGQV…TELTKFEVKY (89 aa)) enclose the Acylphosphatase-like domain. Active-site residues include Arg18 and Asn36.

This sequence belongs to the acylphosphatase family.

It carries out the reaction an acyl phosphate + H2O = a carboxylate + phosphate + H(+). The chain is Acylphosphatase (acyP) from Oceanobacillus iheyensis (strain DSM 14371 / CIP 107618 / JCM 11309 / KCTC 3954 / HTE831).